The following is a 388-amino-acid chain: Succinate--CoA ligase [ADP-forming] subunit beta (388 aa).

In terms of domain architecture, ATP-grasp spans 9–244; the sequence is KQLFAEYGLP…PSQDDAREAH (236 aa). ATP-binding positions include Lys-46, 53-55, Glu-99, Thr-102, and Glu-107; that span reads GRG. Mg(2+) is bound by residues Asn-199 and Asp-213. Substrate-binding positions include Asn-264 and 321–323; that span reads GIV.

Belongs to the succinate/malate CoA ligase beta subunit family. Heterotetramer of two alpha and two beta subunits. Mg(2+) serves as cofactor.

It carries out the reaction succinate + ATP + CoA = succinyl-CoA + ADP + phosphate. The enzyme catalyses GTP + succinate + CoA = succinyl-CoA + GDP + phosphate. The protein operates within carbohydrate metabolism; tricarboxylic acid cycle; succinate from succinyl-CoA (ligase route): step 1/1. In terms of biological role, succinyl-CoA synthetase functions in the citric acid cycle (TCA), coupling the hydrolysis of succinyl-CoA to the synthesis of either ATP or GTP and thus represents the only step of substrate-level phosphorylation in the TCA. The beta subunit provides nucleotide specificity of the enzyme and binds the substrate succinate, while the binding sites for coenzyme A and phosphate are found in the alpha subunit. The sequence is that of Succinate--CoA ligase [ADP-forming] subunit beta from Pseudomonas putida (strain ATCC 700007 / DSM 6899 / JCM 31910 / BCRC 17059 / LMG 24140 / F1).